The following is a 470-amino-acid chain: GTPase Der (470 aa).

2 EngA-type G domains span residues 2 to 165 (KTIA…GLEA) and 201 to 372 (IRVG…ENFS). GTP contacts are provided by residues 8 to 15 (GKPNVGKS), 55 to 59 (DTGGI), 117 to 120 (NKID), 207 to 214 (GKVNVGKS), 254 to 258 (DTAGI), and 318 to 321 (NKWD). The KH-like domain occupies 373 to 457 (RRIPTSILNK…PILIRARKRG (85 aa)).

The protein belongs to the TRAFAC class TrmE-Era-EngA-EngB-Septin-like GTPase superfamily. EngA (Der) GTPase family. Associates with the 50S ribosomal subunit.

Its function is as follows. GTPase that plays an essential role in the late steps of ribosome biogenesis. This chain is GTPase Der, found in Wolinella succinogenes (strain ATCC 29543 / DSM 1740 / CCUG 13145 / JCM 31913 / LMG 7466 / NCTC 11488 / FDC 602W) (Vibrio succinogenes).